A 66-amino-acid polypeptide reads, in one-letter code: Cold shock-like protein CspLA (66 aa).

A CSD domain is found at 4 to 63 (GTVKWFNAEKGFGFIERENGDDVFVHFSAIQGDGFKSLDEGQAVTFDVEEGQRGPQAANV).

As to quaternary structure, homodimer.

Its subcellular location is the cytoplasm. The chain is Cold shock-like protein CspLA (cspLA) from Listeria innocua serovar 6a (strain ATCC BAA-680 / CLIP 11262).